The sequence spans 276 residues: Kallikrein-11 (276 aa).

The N-terminal stretch at 1–44 (MRRLKSDWKLSTETREPGARPALLQARMILRLIALALVTGHVGG) is a signal peptide. The propeptide at 45–47 (ETR) is activation peptide. The Peptidase S1 domain occupies 48 to 274 (IIKGYECRPH…YFNWIHEVMR (227 aa)). 5 disulfide bridges follow: Cys-54-Cys-189, Cys-73-Cys-89, Cys-168-Cys-235, Cys-200-Cys-214, and Cys-225-Cys-250. The Charge relay system role is filled by His-88. Asn-125 carries an N-linked (GlcNAc...) asparagine glycan. Asp-136 acts as the Charge relay system in catalysis. Asn-191 and Asn-207 each carry an N-linked (GlcNAc...) asparagine glycan. The active-site Charge relay system is the Ser-229. N-linked (GlcNAc...) asparagine glycosylation is present at Asn-236.

This sequence belongs to the peptidase S1 family. Kallikrein subfamily. As to expression, expressed in brain and prostate (isoform 1) and prostate (isoform 2).

It is found in the secreted. Possible multifunctional protease. Efficiently cleaves 'bz-Phe-Arg-4-methylcoumaryl-7-amide', a kallikrein substrate, and weakly cleaves other substrates for kallikrein and trypsin. This is Kallikrein-11 (Klk11) from Mus musculus (Mouse).